The primary structure comprises 598 residues: Polypeptide N-acetylgalactosaminyltransferase 17 (598 aa).

The Cytoplasmic segment spans residues Met1 to Arg6. The helical; Signal-anchor for type II membrane protein transmembrane segment at Val7–Lys27 threads the bilayer. Topologically, residues Cys28–Lys598 are lumenal. An N-linked (GlcNAc...) asparagine glycan is attached at Asn50. Disulfide bonds link Cys142–Cys373 and Cys364–Cys443. The catalytic subdomain A stretch occupies residues Leu151 to Arg262. The substrate site is built by Asp192 and Arg223. Mn(2+)-binding residues include Asp246, His248, and His378. Positions Pro319–Arg381 are catalytic subdomain B. Residues Arg381 and Tyr386 each coordinate substrate. 2 N-linked (GlcNAc...) asparagine glycosylation sites follow: Asn461 and Asn486. The Ricin B-type lectin domain maps to Ala465–Lys594. Cystine bridges form between Cys478-Cys494, Cys526-Cys541, and Cys568-Cys586.

This sequence belongs to the glycosyltransferase 2 family. GalNAc-T subfamily. Mn(2+) is required as a cofactor. In terms of tissue distribution, highly expressed in brain and heart. Weakly expressed in kidney, liver, lung and spleen.

Its subcellular location is the golgi apparatus membrane. The catalysed reaction is L-seryl-[protein] + UDP-N-acetyl-alpha-D-galactosamine = a 3-O-[N-acetyl-alpha-D-galactosaminyl]-L-seryl-[protein] + UDP + H(+). The enzyme catalyses L-threonyl-[protein] + UDP-N-acetyl-alpha-D-galactosamine = a 3-O-[N-acetyl-alpha-D-galactosaminyl]-L-threonyl-[protein] + UDP + H(+). It participates in protein modification; protein glycosylation. May catalyze the initial reaction in O-linked oligosaccharide biosynthesis, the transfer of an N-acetyl-D-galactosamine residue to a serine or threonine residue on the protein receptor. This is Polypeptide N-acetylgalactosaminyltransferase 17 from Homo sapiens (Human).